Consider the following 128-residue polypeptide: MIVKSLDDIIGTDDETSSDNWTSRRFIMKKDNVGFSLNDTLIKAGTTNFFWYKNHIEAVYCIEGEGEIEKLETGEIYKLKAGTMYLLNEHDKHELRAKTQMRMVCVFNPPLVGTETHTEEGYYPLLTE.

This sequence belongs to the ectoine synthase family.

It carries out the reaction (2S)-4-acetamido-2-aminobutanoate = L-ectoine + H2O. It participates in amine and polyamine biosynthesis; ectoine biosynthesis; L-ectoine from L-aspartate 4-semialdehyde: step 3/3. Its function is as follows. Catalyzes the circularization of gamma-N-acetyl-alpha,gamma-diaminobutyric acid (ADABA) to ectoine (1,4,5,6-tetrahydro-2-methyl-4-pyrimidine carboxylic acid), which is an excellent osmoprotectant. This chain is L-ectoine synthase, found in Virgibacillus pantothenticus.